Reading from the N-terminus, the 578-residue chain is Isocitrate dehydrogenase kinase/phosphatase (578 aa).

Residues 315–321 (APGIRGM) and Lys336 contribute to the ATP site. The active site involves Asp371.

The protein belongs to the AceK family.

It localises to the cytoplasm. The catalysed reaction is L-seryl-[isocitrate dehydrogenase] + ATP = O-phospho-L-seryl-[isocitrate dehydrogenase] + ADP + H(+). Functionally, bifunctional enzyme which can phosphorylate or dephosphorylate isocitrate dehydrogenase (IDH) on a specific serine residue. This is a regulatory mechanism which enables bacteria to bypass the Krebs cycle via the glyoxylate shunt in response to the source of carbon. When bacteria are grown on glucose, IDH is fully active and unphosphorylated, but when grown on acetate or ethanol, the activity of IDH declines drastically concomitant with its phosphorylation. This chain is Isocitrate dehydrogenase kinase/phosphatase, found in Escherichia coli O17:K52:H18 (strain UMN026 / ExPEC).